A 76-amino-acid chain; its full sequence is Alpha/kappa-conotoxin-like pl14.1 (76 aa).

A signal peptide spans 1–27 (MPSVRSVTCCCLLWMMLSVQLVTPGSP). Residues 28–39 (ATAQLSGQRTAR) constitute a propeptide that is removed on maturation. 2 disulfide bridges follow: Cys-46–Cys-61 and Cys-50–Cys-63. Asparagine amide is present on Asn-64. The propeptide occupies 65-76 (GKRDVVSSSMAV).

Belongs to the conotoxin J superfamily. Expressed by the venom duct.

The protein resides in the secreted. Its function is as follows. Highly inhibits both nicotinic acetylcholine receptors (neuronal (alpha-3/beta-4) and muscular (alpha-1/beta-1/epsilon/delta) subtypes) and the voltage-gated potassium channel Kv1.6/KCNA6 subtype. This chain is Alpha/kappa-conotoxin-like pl14.1, found in Conus planorbis (Planorbis cone).